Consider the following 783-residue polypeptide: Probable alpha,alpha-trehalose-phosphate synthase [UDP-forming] 3 (783 aa).

Residues 11–456 (QTLLVVANRL…GFDFLSELND (446 aa)) are glycosyltransferase.

It in the N-terminal section; belongs to the glycosyltransferase 20 family. In the C-terminal section; belongs to the trehalose phosphatase family.

The enzyme catalyses D-glucose 6-phosphate + UDP-alpha-D-glucose = alpha,alpha-trehalose 6-phosphate + UDP + H(+). The polypeptide is Probable alpha,alpha-trehalose-phosphate synthase [UDP-forming] 3 (TPS3) (Arabidopsis thaliana (Mouse-ear cress)).